A 197-amino-acid polypeptide reads, in one-letter code: Glycerol-3-phosphate acyltransferase (197 aa).

5 helical membrane-spanning segments follow: residues 7–27, 55–75, 78–98, 116–136, and 157–177; these read TLLP…LILT, GLAA…VLIV, VWPG…CFPV, LALA…VLFL, and VLGY…VLYL.

It belongs to the PlsY family. Probably interacts with PlsX.

It localises to the cell inner membrane. It catalyses the reaction an acyl phosphate + sn-glycerol 3-phosphate = a 1-acyl-sn-glycero-3-phosphate + phosphate. It participates in lipid metabolism; phospholipid metabolism. In terms of biological role, catalyzes the transfer of an acyl group from acyl-phosphate (acyl-PO(4)) to glycerol-3-phosphate (G3P) to form lysophosphatidic acid (LPA). This enzyme utilizes acyl-phosphate as fatty acyl donor, but not acyl-CoA or acyl-ACP. In Novosphingobium aromaticivorans (strain ATCC 700278 / DSM 12444 / CCUG 56034 / CIP 105152 / NBRC 16084 / F199), this protein is Glycerol-3-phosphate acyltransferase.